Consider the following 765-residue polypeptide: DNA ligase (765 aa).

The disordered stretch occupies residues 1 to 34; that stretch reads MAGDDEDRAVPAAEGAPPPSALPPVSGLDVKAAE. NAD(+) contacts are provided by residues 61–65, 110–111, and glutamate 144; these read DAEYD and SL. Lysine 146 acts as the N6-AMP-lysine intermediate in catalysis. 4 residues coordinate NAD(+): arginine 167, glutamate 204, lysine 317, and lysine 341. Zn(2+) contacts are provided by cysteine 446, cysteine 449, cysteine 464, and cysteine 470. Positions 687–765 constitute a BRCT domain; sequence ATDSAIAGKT…EDEWLAIAQG (79 aa).

This sequence belongs to the NAD-dependent DNA ligase family. LigA subfamily. Requires Mg(2+) as cofactor. It depends on Mn(2+) as a cofactor.

It carries out the reaction NAD(+) + (deoxyribonucleotide)n-3'-hydroxyl + 5'-phospho-(deoxyribonucleotide)m = (deoxyribonucleotide)n+m + AMP + beta-nicotinamide D-nucleotide.. Functionally, DNA ligase that catalyzes the formation of phosphodiester linkages between 5'-phosphoryl and 3'-hydroxyl groups in double-stranded DNA using NAD as a coenzyme and as the energy source for the reaction. It is essential for DNA replication and repair of damaged DNA. The sequence is that of DNA ligase from Paracoccus denitrificans (strain Pd 1222).